A 497-amino-acid polypeptide reads, in one-letter code: Alkane hydroxylase MAH1 (497 aa).

A helical membrane pass occupies residues 3–23 (MLGFYVTFIFFLVCLFTYFFL). Cysteine 444 contributes to the heme binding site.

This sequence belongs to the cytochrome P450 family. Heme serves as cofactor. Expressed in the expanding regions of the inflorescence stems, specifically to the epidermal pavement cells, petioles and siliques.

It localises to the endoplasmic reticulum membrane. Involved in the formation of secondary alcohols and ketones in stem cuticular wax. Catalyzes the hydroxylation of a methylene unit in the middle of alkane molecules to form secondary alcohols and possibly also a second hydroxylation leading to the corresponding ketones. The sequence is that of Alkane hydroxylase MAH1 from Arabidopsis thaliana (Mouse-ear cress).